Here is a 345-residue protein sequence, read N- to C-terminus: MTSKPMTRRPTANNHRNRSPETAKKLGQLHPRNPHQGRYDFVALTHALPELAKHTITNPKGEPTINFSDSAAVRVLNQALLAHYYGVKFWDIPEGYLCPPIPGRADYIHYIADLLAQTTHVNKDNTPPTGKEIHALDIGTGASAIYPIVGSQSYGWRFTASDIDPISVNTAALICETNPKLKSAVKVKLQPEPKRIFANIIGRQDYFDVVVCNPPFHASLEEAMEANSRKQHNLQRHRGKNENEQISRSSTKSGNAAQNLNFGGQHKELWSEGGEIAFLTKMAKESQDFAEHVGWFTTLVSKSENVKPMQLLLKQLGVAQMRIIEMSQGQKSTRILAWRFNTDEE.

A compositionally biased stretch (polar residues) spans 1–14 (MTSKPMTRRPTANN). Disordered regions lie at residues 1–35 (MTSKPMTRRPTANNHRNRSPETAKKLGQLHPRNPH) and 225–258 (EANSRKQHNLQRHRGKNENEQISRSSTKSGNAAQ). Positions 229-239 (RKQHNLQRHRG) are enriched in basic residues. A compositionally biased stretch (polar residues) spans 246–258 (ISRSSTKSGNAAQ).

Belongs to the methyltransferase superfamily. METTL16/RlmF family.

It is found in the cytoplasm. It carries out the reaction adenosine(1618) in 23S rRNA + S-adenosyl-L-methionine = N(6)-methyladenosine(1618) in 23S rRNA + S-adenosyl-L-homocysteine + H(+). Its function is as follows. Specifically methylates the adenine in position 1618 of 23S rRNA. The chain is Ribosomal RNA large subunit methyltransferase F from Psychrobacter arcticus (strain DSM 17307 / VKM B-2377 / 273-4).